We begin with the raw amino-acid sequence, 347 residues long: Tetracycline resistance determinant (347 aa).

The next 8 membrane-spanning stretches (helical) occupy residues 3–20 (VLGAAALALFLVPLLIVA), 30–52 (SPAALALFALGAAGLAVFIPVEL), 73–95 (CSAVNFTIGVGIFGTVTTLPLFL), 108–130 (LVVIPFMLGTIASQMVSGKLIAS), 137–156 (LAIVGLGSMAGALLAMATTG), 161–183 (MWGIVLIVLWLGVGIGLSQTVIT), 204–226 (CAGQIGGSTGIAVLFSVMFAVAL), and 294–316 (GFHIMFLPGGVVLLAGFVMTWFL). The disordered stretch occupies residues 321–347 (EETAPEEERPAESGAGAKNGPLPASDA).

This sequence belongs to the major facilitator superfamily. TCR/Tet family.

It localises to the cell membrane. Resistance to tetracycline by an active tetracycline efflux. This is an energy-dependent process that decreases the accumulation of the antibiotic in whole cells. This protein functions as a metal-tetracycline/H(+) antiporter. The chain is Tetracycline resistance determinant (tetB) from Streptomyces rimosus.